The primary structure comprises 349 residues: UDP-3-O-acylglucosamine N-acyltransferase (349 aa).

Residue His240 is the Proton acceptor of the active site.

The protein belongs to the transferase hexapeptide repeat family. LpxD subfamily. Homotrimer.

It carries out the reaction a UDP-3-O-[(3R)-3-hydroxyacyl]-alpha-D-glucosamine + a (3R)-hydroxyacyl-[ACP] = a UDP-2-N,3-O-bis[(3R)-3-hydroxyacyl]-alpha-D-glucosamine + holo-[ACP] + H(+). It participates in bacterial outer membrane biogenesis; LPS lipid A biosynthesis. In terms of biological role, catalyzes the N-acylation of UDP-3-O-acylglucosamine using 3-hydroxyacyl-ACP as the acyl donor. Is involved in the biosynthesis of lipid A, a phosphorylated glycolipid that anchors the lipopolysaccharide to the outer membrane of the cell. This is UDP-3-O-acylglucosamine N-acyltransferase from Porphyromonas gingivalis (strain ATCC 33277 / DSM 20709 / CIP 103683 / JCM 12257 / NCTC 11834 / 2561).